The sequence spans 408 residues: tRNA(Ile)-lysidine synthase (408 aa).

27–32 (SGGGDS) lines the ATP pocket.

This sequence belongs to the tRNA(Ile)-lysidine synthase family.

Its subcellular location is the cytoplasm. It carries out the reaction cytidine(34) in tRNA(Ile2) + L-lysine + ATP = lysidine(34) in tRNA(Ile2) + AMP + diphosphate + H(+). Its function is as follows. Ligates lysine onto the cytidine present at position 34 of the AUA codon-specific tRNA(Ile) that contains the anticodon CAU, in an ATP-dependent manner. Cytidine is converted to lysidine, thus changing the amino acid specificity of the tRNA from methionine to isoleucine. In Caulobacter vibrioides (strain ATCC 19089 / CIP 103742 / CB 15) (Caulobacter crescentus), this protein is tRNA(Ile)-lysidine synthase.